The following is a 488-amino-acid chain: Auxin transporter-like protein 1 (488 aa).

Residues 1 to 36 (MSGEKQAEESIVVSGEDEVAGRKVEDSAAEEDIDGN) are disordered. The Cytoplasmic portion of the chain corresponds to 1–64 (MSGEKQAEES…DAWFSCASNQ (64 aa)). A helical membrane pass occupies residues 65 to 82 (VAQVLLTLPYSFSQLGML). The Extracellular portion of the chain corresponds to 83-84 (SG). Residues 85–105 (ILLQIFYGLMGSWTAYLISVL) traverse the membrane as a helical segment. Over 106-141 (YVEYRARMEKQEAKSFKNHVIQWFEVLDGLLGPYWK) the chain is Cytoplasmic. A helical membrane pass occupies residues 142 to 162 (AAGLAFNCTFLLFGSVIQLIA). The Extracellular segment spans residues 163-178 (CASNIYYINDRLDKRT). Residues 179–199 (WTYIFGACCATTVFIPSFHNY) traverse the membrane as a helical segment. Residues 200–202 (RIW) are Cytoplasmic-facing. Residues 203-223 (SFLGLGMTTYTAWYLTIASFL) traverse the membrane as a helical segment. Residues 224 to 238 (HGQAEGVTHSGPTKL) are Extracellular-facing. Residues 239–259 (VLYFTGATNILYTFGGHAVTV) traverse the membrane as a helical segment. Residues 260 to 273 (EIMHAMWKPRKFKS) lie on the Cytoplasmic side of the membrane. A helical membrane pass occupies residues 274–294 (IYLMATLYVFTLTLPSASAVY). Residues 295 to 320 (WAFGDQLLNHSNAFSLLPKTRFRDTA) lie on the Extracellular side of the membrane. N303 is a glycosylation site (N-linked (GlcNAc...) asparagine). A helical membrane pass occupies residues 321–341 (VILMLIHQFITFGFACTPLYF). Over 342 to 362 (VWEKAIGMHHTKSLCLRALVR) the chain is Cytoplasmic. The helical transmembrane segment at 363–383 (LPVVVPIWFLAIIFPFFGPIN) threads the bilayer. S384 is a topological domain (extracellular). Residues 385–405 (AVGALLVTFTVYIIPALAHML) traverse the membrane as a helical segment. Residues 406–427 (TYRTASARRNAAEKPPFFIPSW) lie on the Cytoplasmic side of the membrane. The helical transmembrane segment at 428-448 (AGVYVINAFIVVWVLVLGFGF) threads the bilayer. The Extracellular segment spans residues 449-488 (GGWASMTNFIRQIDTFGLFAKCYQCKPPPAPIAAGAHHRR).

This sequence belongs to the amino acid/polyamine transporter 2 family. Amino acid/auxin permease (AAAP) (TC 2.A.18.1) subfamily.

It is found in the cell membrane. Carrier protein involved in proton-driven auxin influx. Mediates the formation of auxin gradient from developing leaves (site of auxin biosynthesis) to tips by contributing to the loading of auxin in vascular tissues and facilitating acropetal (base to tip) auxin transport within inner tissues of the root apex, and basipetal (tip to base) auxin transport within outer tissues of the root apex. This is Auxin transporter-like protein 1 (LAX1) from Arabidopsis thaliana (Mouse-ear cress).